We begin with the raw amino-acid sequence, 369 residues long: Glutamate 5-kinase (369 aa).

Lys9 is a binding site for ATP. Substrate-binding residues include Ser49, Asp136, and Asn148. Residues Thr168–Asp169 and Thr210–Lys216 contribute to the ATP site. Residues Gln275 to Trp355 form the PUA domain.

This sequence belongs to the glutamate 5-kinase family.

The protein localises to the cytoplasm. The catalysed reaction is L-glutamate + ATP = L-glutamyl 5-phosphate + ADP. It participates in amino-acid biosynthesis; L-proline biosynthesis; L-glutamate 5-semialdehyde from L-glutamate: step 1/2. Catalyzes the transfer of a phosphate group to glutamate to form L-glutamate 5-phosphate. This is Glutamate 5-kinase from Streptococcus pneumoniae (strain Hungary19A-6).